Reading from the N-terminus, the 183-residue chain is Putative calmodulin-like protein 2 (183 aa).

4 EF-hand domains span residues 7 to 42 (EQIAEFREAFNLFDKDGDGTITSKELGTVMGSLGQS), 43 to 78 (PTEAELKKMVEEVDADGSGSIEFEEFLGLLARKLRD), 80 to 115 (GAEDDIREAFRVFDKDQNGFITPDELRHVMANLGDP), and 116 to 151 (LSDDELADMLHEADSDGDGQINYNEFLKVMMAKRRQ). Positions 20, 22, 24, 26, 31, 56, 58, 60, 62, 67, 93, 95, 97, 104, 129, 131, 133, 135, and 140 each coordinate Ca(2+). The tract at residues 154-183 (MEGHGSGGHRSSNSHKKSGCCGPNSSCTIL) is disordered. 2 S-palmitoyl cysteine lipidation sites follow: Cys-173 and Cys-174. Residue Cys-180 is modified to Cysteine methyl ester. Cys-180 carries S-farnesyl cysteine lipidation. Positions 181 to 183 (TIL) are cleaved as a propeptide — removed in mature form.

Belongs to the calmodulin family.

Its subcellular location is the membrane. In terms of biological role, potential calcium sensor. The protein is Putative calmodulin-like protein 2 (CML2) of Oryza sativa subsp. japonica (Rice).